Here is a 122-residue protein sequence, read N- to C-terminus: Small ribosomal subunit protein uS13 (122 aa).

The disordered stretch occupies residues 95 to 122; it reads GLPVRGQRTHTNARTRKGPAKSIAGKKK.

Belongs to the universal ribosomal protein uS13 family. Part of the 30S ribosomal subunit. Forms a loose heterodimer with protein S19. Forms two bridges to the 50S subunit in the 70S ribosome.

Functionally, located at the top of the head of the 30S subunit, it contacts several helices of the 16S rRNA. In the 70S ribosome it contacts the 23S rRNA (bridge B1a) and protein L5 of the 50S subunit (bridge B1b), connecting the 2 subunits; these bridges are implicated in subunit movement. Contacts the tRNAs in the A and P-sites. This chain is Small ribosomal subunit protein uS13, found in Nitrobacter winogradskyi (strain ATCC 25391 / DSM 10237 / CIP 104748 / NCIMB 11846 / Nb-255).